Reading from the N-terminus, the 179-residue chain is Replication restart protein DnaT (179 aa).

Residues 155–179 (NGGLPKRDVNTVSEPDSQIPPGFRG) form a disordered region.

This sequence belongs to the DnaT family. As to quaternary structure, homooligomerizes. Interacts with PriB. Component of the replication restart primosome. Primosome assembly occurs via a 'hand-off' mechanism. PriA binds to replication forks, subsequently PriB then DnaT bind; DnaT then displaces ssDNA to generate the helicase loading substrate.

Involved in the restart of stalled replication forks, which reloads the replicative helicase on sites other than the origin of replication. Can function in multiple replication restart pathways. Displaces ssDNA from a PriB-ssDNA complex. Probably forms a spiral filament on ssDNA. The chain is Replication restart protein DnaT from Escherichia coli O8 (strain IAI1).